The sequence spans 257 residues: Uroplakin-1a (257 aa).

Topologically, residues 1–13 (MASAATEGEKGSP) are cytoplasmic. Residues 14–34 (VVVGLLVVGNIIILLSGLALF) form a helical membrane-spanning segment. Residues 35–58 (AETVWVTADQYRVYPLMGVSGKDD) are Extracellular-facing. Residues 59–85 (VFAGAWIAIFCGFSFFVVASFGVGAAL) form a helical membrane-spanning segment. Topologically, residues 86-90 (CRRRY) are cytoplasmic. A helical membrane pass occupies residues 91–111 (MILTYLLLMLIVYIFECASCI). Topologically, residues 112 to 229 (TSYTHRDYMV…HIGHAIDSYT (118 aa)) are extracellular. Asn-169 carries an N-linked (GlcNAc...) asparagine glycan. A helical transmembrane segment spans residues 230 to 251 (WGISWFGFAILMWTLPVMLIAM). At 252-257 (YFYTTL) the chain is on the cytoplasmic side.

This sequence belongs to the tetraspanin (TM4SF) family. Homodimer; disulfide-linked. Interacts with uroplakin-2 (UPK2). Binds to uropathogenic E.coli fimH.

It is found in the membrane. Functionally, component of the asymmetric unit membrane (AUM); a highly specialized biomembrane elaborated by terminally differentiated urothelial cells. May play an important role in normal bladder epithelial physiology, possibly in regulating membrane permeability of superficial umbrella cells or in stabilizing the apical membrane through AUM/cytoskeletal interactions. This chain is Uroplakin-1a (Upk1a), found in Mus musculus (Mouse).